A 229-amino-acid polypeptide reads, in one-letter code: Cytochrome c oxidase subunit 2 (229 aa).

Residues Met-1 to His-26 lie on the Mitochondrial intermembrane side of the membrane. A helical membrane pass occupies residues Ala-27–Asn-48. At Ser-49–Glu-62 the chain is on the mitochondrial matrix side. The helical transmembrane segment at Met-63–Arg-82 threads the bilayer. The Mitochondrial intermembrane segment spans residues Leu-83 to Ser-229. Residues His-161, Cys-196, Glu-198, Cys-200, His-204, and Met-207 each contribute to the Cu cation site. Glu-198 serves as a coordination point for Mg(2+).

Belongs to the cytochrome c oxidase subunit 2 family. In terms of assembly, component of the cytochrome c oxidase (complex IV, CIV), a multisubunit enzyme composed of a catalytic core of 3 subunits and several supernumerary subunits. The complex exists as a monomer or a dimer and forms supercomplexes (SCs) in the inner mitochondrial membrane with ubiquinol-cytochrome c oxidoreductase (cytochrome b-c1 complex, complex III, CIII). Cu cation serves as cofactor.

The protein resides in the mitochondrion inner membrane. The enzyme catalyses 4 Fe(II)-[cytochrome c] + O2 + 8 H(+)(in) = 4 Fe(III)-[cytochrome c] + 2 H2O + 4 H(+)(out). Component of the cytochrome c oxidase, the last enzyme in the mitochondrial electron transport chain which drives oxidative phosphorylation. The respiratory chain contains 3 multisubunit complexes succinate dehydrogenase (complex II, CII), ubiquinol-cytochrome c oxidoreductase (cytochrome b-c1 complex, complex III, CIII) and cytochrome c oxidase (complex IV, CIV), that cooperate to transfer electrons derived from NADH and succinate to molecular oxygen, creating an electrochemical gradient over the inner membrane that drives transmembrane transport and the ATP synthase. Cytochrome c oxidase is the component of the respiratory chain that catalyzes the reduction of oxygen to water. Electrons originating from reduced cytochrome c in the intermembrane space (IMS) are transferred via the dinuclear copper A center (CU(A)) of subunit 2 and heme A of subunit 1 to the active site in subunit 1, a binuclear center (BNC) formed by heme A3 and copper B (CU(B)). The BNC reduces molecular oxygen to 2 water molecules using 4 electrons from cytochrome c in the IMS and 4 protons from the mitochondrial matrix. The sequence is that of Cytochrome c oxidase subunit 2 (mt:CoII) from Drosophila bifasciata (Fruit fly).